Reading from the N-terminus, the 603-residue chain is Leucine-rich repeat-containing protein 40 (603 aa).

The tract at residues 1 to 27 is disordered; it reads MAAARRARAGDPRAGFRRAAEEQSPAV. LRR repeat units lie at residues 83–104, 106–127, 129–150, 152–173, 175–196, 198–219, 221–242, 244–265, 266–286, 290–311, 313–335, 336–357, 401–422, 427–449, 451–473, 474–495, 497–518, 520–541, 544–565, and 567–588; these read DLTK…VRLL, ALTV…LGQL, NLQK…LLQL, HLKG…FGQL, SLEE…FALL, NLVR…ISAM, SLRQ…LASM, SLEQ…PSCK, LLKE…ENLK, SLSV…ITLL, KLER…GNLS, QLKF…LLQK, TLKL…VFSA, PVTS…VELK, SVCD…CTLH, KLTH…MEAL, RLQV…LYRM, ALET…QLKK, QLGT…LGNC, and TLRT…ILAK.

This Gallus gallus (Chicken) protein is Leucine-rich repeat-containing protein 40 (LRRC40).